The following is a 55-amino-acid chain: Large ribosomal subunit protein bL33 (55 aa).

The protein belongs to the bacterial ribosomal protein bL33 family.

The chain is Large ribosomal subunit protein bL33 from Rhodospirillum centenum (strain ATCC 51521 / SW).